A 322-amino-acid polypeptide reads, in one-letter code: NADH-quinone oxidoreductase subunit H (322 aa).

8 consecutive transmembrane segments (helical) span residues 12–32, 79–99, 111–131, 151–171, 183–203, 234–254, 262–282, and 301–321; these read IGKALIVLVGIVGAGAFMSFI, IFILAPIIAFTAFILAFAVVP, VGLLYILAIAGLAVYAVLFAG, LSYEVFLGLSLMGIVIQTGSF, LWNVVPQFLGFITFLFAGVAV, FFVGEYIGIVLISSLIVTLFF, LPPFFWFALKTACFMVFFILL, and VCLPLTLINMLITAAVVLMNV.

It belongs to the complex I subunit 1 family. NDH-1 is composed of 13 different subunits. Subunits NuoA, H, J, K, L, M, N constitute the membrane sector of the complex.

The protein resides in the cell inner membrane. It carries out the reaction a quinone + NADH + 5 H(+)(in) = a quinol + NAD(+) + 4 H(+)(out). NDH-1 shuttles electrons from NADH, via FMN and iron-sulfur (Fe-S) centers, to quinones in the respiratory chain. The immediate electron acceptor for the enzyme in this species is believed to be ubiquinone. Couples the redox reaction to proton translocation (for every two electrons transferred, four hydrogen ions are translocated across the cytoplasmic membrane), and thus conserves the redox energy in a proton gradient. This subunit may bind ubiquinone. This Shewanella oneidensis (strain ATCC 700550 / JCM 31522 / CIP 106686 / LMG 19005 / NCIMB 14063 / MR-1) protein is NADH-quinone oxidoreductase subunit H.